Reading from the N-terminus, the 260-residue chain is Ribonuclease HII (260 aa).

The 189-residue stretch at Arg71 to Gln259 folds into the RNase H type-2 domain. The a divalent metal cation site is built by Asp77, Glu78, and Asp169.

The protein belongs to the RNase HII family. Mn(2+) serves as cofactor. Requires Mg(2+) as cofactor.

The protein resides in the cytoplasm. The catalysed reaction is Endonucleolytic cleavage to 5'-phosphomonoester.. Its function is as follows. Endonuclease that specifically degrades the RNA of RNA-DNA hybrids. In Geobacillus kaustophilus (strain HTA426), this protein is Ribonuclease HII.